The sequence spans 263 residues: Acyl-[acyl-carrier-protein]--UDP-N-acetylglucosamine O-acyltransferase (263 aa).

The protein belongs to the transferase hexapeptide repeat family. LpxA subfamily. Homotrimer.

The protein localises to the cytoplasm. The catalysed reaction is a (3R)-hydroxyacyl-[ACP] + UDP-N-acetyl-alpha-D-glucosamine = a UDP-3-O-[(3R)-3-hydroxyacyl]-N-acetyl-alpha-D-glucosamine + holo-[ACP]. Its pathway is glycolipid biosynthesis; lipid IV(A) biosynthesis; lipid IV(A) from (3R)-3-hydroxytetradecanoyl-[acyl-carrier-protein] and UDP-N-acetyl-alpha-D-glucosamine: step 1/6. In terms of biological role, involved in the biosynthesis of lipid A, a phosphorylated glycolipid that anchors the lipopolysaccharide to the outer membrane of the cell. This is Acyl-[acyl-carrier-protein]--UDP-N-acetylglucosamine O-acyltransferase from Campylobacter jejuni subsp. jejuni serotype O:2 (strain ATCC 700819 / NCTC 11168).